Reading from the N-terminus, the 73-residue chain is Conotoxin CnIIIF (73 aa).

The signal sequence occupies residues 1 to 19 (MSKLGVLLTICLLLFPLTA). Residues 20 to 51 (LPMDGDQSVDRPAERMQDDISSGQHPLFNQKR) constitute a propeptide that is removed on maturation. Disulfide bonds link cysteine 53–cysteine 72, cysteine 54–cysteine 70, and cysteine 60–cysteine 73.

It belongs to the conotoxin M superfamily. In terms of tissue distribution, expressed by the venom duct.

It localises to the secreted. Its function is as follows. Shows a paralytic effect in fish. The chain is Conotoxin CnIIIF from Conus consors (Singed cone).